Consider the following 813-residue polypeptide: Leucine--tRNA ligase (813 aa).

Positions 40–51 match the 'HIGH' region motif; that stretch reads SYPSGSKLHAGH. The 'KMSKS' region signature appears at 572 to 576; the sequence is KMSKS. Position 575 (Lys-575) interacts with ATP.

Belongs to the class-I aminoacyl-tRNA synthetase family.

It localises to the cytoplasm. The enzyme catalyses tRNA(Leu) + L-leucine + ATP = L-leucyl-tRNA(Leu) + AMP + diphosphate. In Clostridium botulinum (strain Langeland / NCTC 10281 / Type F), this protein is Leucine--tRNA ligase.